A 186-amino-acid polypeptide reads, in one-letter code: ATP synthase subunit delta (186 aa).

This sequence belongs to the ATPase delta chain family. F-type ATPases have 2 components, F(1) - the catalytic core - and F(0) - the membrane proton channel. F(1) has five subunits: alpha(3), beta(3), gamma(1), delta(1), epsilon(1). F(0) has three main subunits: a(1), b(2) and c(10-14). The alpha and beta chains form an alternating ring which encloses part of the gamma chain. F(1) is attached to F(0) by a central stalk formed by the gamma and epsilon chains, while a peripheral stalk is formed by the delta and b chains.

The protein localises to the cell inner membrane. F(1)F(0) ATP synthase produces ATP from ADP in the presence of a proton or sodium gradient. F-type ATPases consist of two structural domains, F(1) containing the extramembraneous catalytic core and F(0) containing the membrane proton channel, linked together by a central stalk and a peripheral stalk. During catalysis, ATP synthesis in the catalytic domain of F(1) is coupled via a rotary mechanism of the central stalk subunits to proton translocation. Functionally, this protein is part of the stalk that links CF(0) to CF(1). It either transmits conformational changes from CF(0) to CF(1) or is implicated in proton conduction. This chain is ATP synthase subunit delta, found in Nitrobacter winogradskyi (strain ATCC 25391 / DSM 10237 / CIP 104748 / NCIMB 11846 / Nb-255).